Reading from the N-terminus, the 240-residue chain is Uridylate kinase (240 aa).

Position 13–16 (13–16 (KASG)) interacts with ATP. Residues 21 to 26 (GGQGFG) form an involved in allosteric activation by GTP region. Residue Gly55 coordinates UMP. Residues Gly56 and Arg60 each coordinate ATP. UMP contacts are provided by residues Asp75 and 136–143 (TGNPFFTT). 4 residues coordinate ATP: Thr163, Gln164, Tyr169, and Asp172.

This sequence belongs to the UMP kinase family. In terms of assembly, homohexamer.

It is found in the cytoplasm. The enzyme catalyses UMP + ATP = UDP + ADP. It functions in the pathway pyrimidine metabolism; CTP biosynthesis via de novo pathway; UDP from UMP (UMPK route): step 1/1. Allosterically activated by GTP. Inhibited by UTP. In terms of biological role, catalyzes the reversible phosphorylation of UMP to UDP. The sequence is that of Uridylate kinase from Rhizobium johnstonii (strain DSM 114642 / LMG 32736 / 3841) (Rhizobium leguminosarum bv. viciae).